We begin with the raw amino-acid sequence, 201 residues long: CASP-like protein 2D1 (201 aa).

At methionine 1–arginine 26 the chain is on the cytoplasmic side. The helical transmembrane segment at leucine 27–methionine 47 threads the bilayer. Residues alanine 48–tyrosine 70 lie on the Extracellular side of the membrane. The helical transmembrane segment at leucine 71 to cysteine 91 threads the bilayer. Residues arginine 92 to aspartate 98 lie on the Cytoplasmic side of the membrane. Residues tryptophan 99–alanine 119 traverse the membrane as a helical segment. Over alanine 120–alanine 148 the chain is Extracellular. The chain crosses the membrane as a helical span at residues alanine 149–isoleucine 169. Over serine 170 to glycine 201 the chain is Cytoplasmic. Over residues proline 180–glutamine 194 the composition is skewed to polar residues. The disordered stretch occupies residues proline 180–glycine 201.

The protein belongs to the Casparian strip membrane proteins (CASP) family. As to quaternary structure, homodimer and heterodimers.

Its subcellular location is the cell membrane. This is CASP-like protein 2D1 from Oryza sativa subsp. indica (Rice).